A 208-amino-acid polypeptide reads, in one-letter code: uncharacterized protein (208 aa).

The interval 126-151 is disordered; it reads VGSGSGSDSSSGSTSSPNTVNNYNSD. Over residues 131–141 the composition is skewed to low complexity; that stretch reads GSDSSSGSTSS.

This is an uncharacterized protein from Dictyostelium discoideum (Social amoeba).